The primary structure comprises 251 residues: HTH-type transcriptional regulator UlaR (251 aa).

Positions 3 to 58 constitute an HTH deoR-type domain; that stretch reads EAQRHQILLEMLAQLGFVTVEKVVERLGISPATARRDINKLDESGKLKKVRNGAEA. The segment at residues 20–39 is a DNA-binding region (H-T-H motif); sequence VTVEKVVERLGISPATARRD.

The protein localises to the cytoplasm. Represses ulaG and the ulaABCDEF operon. This chain is HTH-type transcriptional regulator UlaR, found in Escherichia coli O139:H28 (strain E24377A / ETEC).